A 390-amino-acid polypeptide reads, in one-letter code: MEKEIKDHKSVGIVEKQFFTCAQVPSPLILENGAKLGPITIAYETYGNLSARKDNAILINHAFSGDSHVAGHYATDGPKEKPGWWDFLVGPGKGIDTDKYFIICSNILGSCNGTTGPASKNSETGEAYALDFPMVTIGDMVATQKLLIDHLGIPKLLAVIGGSVGGMQTLEWAIRYPEMMHSVIPIATTMRHSALAIAFNEIARQAIMTDPHWNRGKYYGQAHPDTGLAVARMVGHVTYLSDEAMRRKFGRNLQEKENLSYGFDADFQVESYLRYQGNKFVHRFDANSLLYITKASDYFDIVERISTSGPETELTAPQQKYLVISYSSDWLYPTYQARDLVKALKRSGRNVSFSEIESDCGHDAFLIPDDRLEQLMRGFLAGIYTGIAEI.

Residues 55–366 form the AB hydrolase-1 domain; that stretch reads NAILINHAFS…ESDCGHDAFL (312 aa). Serine 163 acts as the Nucleophile in catalysis. Residue arginine 232 coordinates substrate. Residues aspartate 329 and histidine 362 contribute to the active site. Residue aspartate 363 coordinates substrate.

It belongs to the AB hydrolase superfamily. MetX family. As to quaternary structure, homodimer.

It is found in the cytoplasm. The enzyme catalyses L-homoserine + acetyl-CoA = O-acetyl-L-homoserine + CoA. The protein operates within amino-acid biosynthesis; L-methionine biosynthesis via de novo pathway; O-acetyl-L-homoserine from L-homoserine: step 1/1. In terms of biological role, transfers an acetyl group from acetyl-CoA to L-homoserine, forming acetyl-L-homoserine. The sequence is that of Homoserine O-acetyltransferase from Desulfotalea psychrophila (strain LSv54 / DSM 12343).